The following is a 552-amino-acid chain: 2-methyl-1,2-propanediol dehydrogenase (552 aa).

This sequence belongs to the GMC oxidoreductase family. It depends on FAD as a cofactor.

The protein localises to the cytoplasm. The catalysed reaction is 2-methylpropane-1,2-diol + NAD(+) = 2-hydroxy-2-methylpropanal + NADH + H(+). In terms of biological role, involved in the degradation of methyl tert-butyl ether (MTBE). Catalyzes the conversion of 2-methyl 1,2-propanediol (2-M1,2-PD) to hydroxyisobutyraldehyde. This chain is 2-methyl-1,2-propanediol dehydrogenase, found in Mycolicibacterium austroafricanum (Mycobacterium austroafricanum).